The chain runs to 190 residues: ATP synthase subunit C lysine N-methyltransferase (190 aa).

This sequence belongs to the ANT/ATPSC lysine N-methyltransferase family.

It localises to the mitochondrion. The enzyme catalyses L-lysyl-[protein] + 3 S-adenosyl-L-methionine = N(6),N(6),N(6)-trimethyl-L-lysyl-[protein] + 3 S-adenosyl-L-homocysteine + 3 H(+). Its function is as follows. Mitochondrial protein-lysine N-methyltransferase that trimethylates ATP synthase subunit C. Trimethylation is required for proper incorporation of the C subunit into the ATP synthase complex and mitochondrial respiration. The sequence is that of ATP synthase subunit C lysine N-methyltransferase from Caenorhabditis elegans.